The sequence spans 23 residues: Apolipophorin-3 (23 aa).

Belongs to the insect apolipophorin-3 family. In terms of assembly, equilibrium between a soluble monomer and a bound lipoprotein form. Apolipophorin-3 associates with lipophorin during lipid loading until each particle contains 9 or 14 molecules of apolipophorin-3. In terms of tissue distribution, hemolymph.

It localises to the secreted. In terms of biological role, assists in the loading of diacylglycerol, generated from triacylglycerol stores in the fat body through the action of adipokinetic hormone, into lipophorin, the hemolymph lipoprotein. It increases the lipid carrying capacity of lipophorin by covering the expanding hydrophobic surface resulting from diacylglycerol uptake. It thus plays a critical role in the transport of lipids during flight in several species of insects. The protein is Apolipophorin-3 of Melanoplus sanguinipes (Migratory grasshopper).